The primary structure comprises 326 residues: L-carnitine dehydrogenase (326 aa).

NAD(+) is bound at residue 19-24 (GTGVIG).

The protein belongs to the 3-hydroxyacyl-CoA dehydrogenase family. L-carnitine dehydrogenase subfamily. Homodimer.

It localises to the cytoplasm. The catalysed reaction is carnitine + NAD(+) = 3-dehydrocarnitine + NADH + H(+). The protein operates within amine and polyamine metabolism; carnitine metabolism. Catalyzes the NAD(+)-dependent oxidation of L-carnitine to 3-dehydrocarnitine. The polypeptide is L-carnitine dehydrogenase (Bacillus cereus (strain ZK / E33L)).